Here is a 368-residue protein sequence, read N- to C-terminus: tRNA-cytidine(32) 2-sulfurtransferase (368 aa).

Residues 95–100 (SGGKDS) carry the PP-loop motif motif. [4Fe-4S] cluster contacts are provided by Cys170, Cys173, and Cys261.

It belongs to the TtcA family. As to quaternary structure, homodimer. Requires Mg(2+) as cofactor. The cofactor is [4Fe-4S] cluster.

It localises to the cytoplasm. It catalyses the reaction cytidine(32) in tRNA + S-sulfanyl-L-cysteinyl-[cysteine desulfurase] + AH2 + ATP = 2-thiocytidine(32) in tRNA + L-cysteinyl-[cysteine desulfurase] + A + AMP + diphosphate + H(+). It participates in tRNA modification. In terms of biological role, catalyzes the ATP-dependent 2-thiolation of cytidine in position 32 of tRNA, to form 2-thiocytidine (s(2)C32). The sulfur atoms are provided by the cysteine/cysteine desulfurase (IscS) system. In Psychrobacter sp. (strain PRwf-1), this protein is tRNA-cytidine(32) 2-sulfurtransferase.